An 864-amino-acid chain; its full sequence is Leucine--tRNA ligase (864 aa).

Positions 42–52 match the 'HIGH' region motif; sequence PYPSGKLHMGH. Positions 624-628 match the 'KMSKS' region motif; sequence KMSKS. Position 627 (Lys-627) interacts with ATP.

The protein belongs to the class-I aminoacyl-tRNA synthetase family.

Its subcellular location is the cytoplasm. It catalyses the reaction tRNA(Leu) + L-leucine + ATP = L-leucyl-tRNA(Leu) + AMP + diphosphate. The sequence is that of Leucine--tRNA ligase from Burkholderia pseudomallei (strain 1710b).